Consider the following 722-residue polypeptide: Solute carrier organic anion transporter family member 4A1 (722 aa).

Residues 1-52 form a disordered region; it reads MPLHQLGDKPLTFPSPNSAMENGLDHTPPSRRASPGTPLSPGSLRSAAHSPL. The Cytoplasmic portion of the chain corresponds to 1-103; that stretch reads MPLHQLGDKP…PCLQVLNTPK (103 aa). Ser34 is modified (phosphoserine). A Phosphothreonine modification is found at Thr37. 4 positions are modified to phosphoserine: Ser40, Ser43, Ser46, and Ser50. A helical membrane pass occupies residues 104–124; it reads GILFFLCAAAFLQGMTVNGFI. At 125 to 143 the chain is on the extracellular side; sequence NTVITSLERRYDLHSYQSG. A helical transmembrane segment spans residues 144-164; sequence LIASSYDIAACLCLTFVSYFG. Residues 165–170 lie on the Cytoplasmic side of the membrane; the sequence is GSGHKP. A helical membrane pass occupies residues 171–195; it reads RWLGWGVLLMGTGSLVFALPHFTAG. Residues 196-222 lie on the Extracellular side of the membrane; the sequence is RYEVELDAGVRTCPANPGAVCADSTSG. Residues 223 to 253 form a helical membrane-spanning segment; that stretch reads LSRYQLVFMLGQFLHGVGATPLYTLGVTYLD. Over 254–272 the chain is Cytoplasmic; sequence ENVKSSCSPVYIAIFYTAA. A helical transmembrane segment spans residues 273 to 293; sequence ILGPAAGYLIGGALLNIYTEM. Residues 294–307 lie on the Extracellular side of the membrane; that stretch reads GRRTELTTESPLWV. Residues 308–332 traverse the membrane as a helical segment; the sequence is GAWWVGFLGSGAAAFFTAVPILGYP. Over 333 to 378 the chain is Cytoplasmic; that stretch reads RQLPGSQRYAVMRAAEMHQLKDSSRGEASNPDFGKTIRDLPLSIWL. The helical transmembrane segment at 379–400 threads the bilayer; it reads LLKNPTFILLCLAGATEATLIT. Over 401–420 the chain is Extracellular; the sequence is GMSTFSPKFLESQFSLSASE. The helical transmembrane segment at 421 to 444 threads the bilayer; it reads AATLFGYLVVPAGGGGTFLGGFFV. At 445–448 the chain is on the cytoplasmic side; sequence NKLR. The helical transmembrane segment at 449–471 threads the bilayer; it reads LRGSAVIKFCLFCTVVSLLGILV. At 472–580 the chain is on the extracellular side; it reads FSLHCPSVPM…TSTCQRKPLL (109 aa). One can recognise a Kazal-like domain in the interval 498-555; the sequence is LNLTAPCNAACSCQPEHYSPVCGSDGLMYFSLCHAGCPAATETNVDGQKVYRDCSCIP. N-linked (GlcNAc...) asparagine glycosylation is present at Asn499. Disulfide bonds link Cys504/Cys534, Cys510/Cys530, and Cys519/Cys553. N-linked (GlcNAc...) asparagine glycosylation is present at Asn557. A helical membrane pass occupies residues 581 to 603; it reads LVFIFVVIFFTFLSSIPALTATL. At 604–612 the chain is on the cytoplasmic side; the sequence is RCVRDPQRS. The helical transmembrane segment at 613 to 638 threads the bilayer; that stretch reads FALGIQWIVVRILGGIPGPIAFGWVI. Over 639–671 the chain is Extracellular; it reads DKACLLWQDQCGQQGSCLVYQNSAMSRYILIMG. Residues 672 to 689 form a helical membrane-spanning segment; it reads LLYKVLGVLFFAIACFLY. Over 690-722 the chain is Cytoplasmic; it reads KPLSESSDGLETCLPSQSSAPDSATDSQLQSSV. Residues 703-722 are disordered; it reads LPSQSSAPDSATDSQLQSSV.

Belongs to the organo anion transporter (TC 2.A.60) family. Widely expressed. Expressed in placental trophoblasts. Expressed in pancreas, kidney, skeletal muscle, liver, lung, brain, heart, colon, small intestine, ovary, testis, prostate, thymus and spleen. In testis, primarily localized to Leydig cells.

The protein localises to the cell membrane. The enzyme catalyses 3,3',5-triiodo-L-thyronine(out) + L-glutamate(in) = 3,3',5-triiodo-L-thyronine(in) + L-glutamate(out). It carries out the reaction L-thyroxine(out) + L-glutamate(in) = L-thyroxine(in) + L-glutamate(out). It catalyses the reaction estrone 3-sulfate(out) + L-glutamate(in) = estrone 3-sulfate(in) + L-glutamate(out). The catalysed reaction is taurocholate(out) + L-glutamate(in) = taurocholate(in) + L-glutamate(out). The enzyme catalyses 3,3',5-triiodo-L-thyronine(out) = 3,3',5-triiodo-L-thyronine(in). It carries out the reaction L-thyroxine(out) = L-thyroxine(in). It catalyses the reaction 3,3',5'-triiodo-L-thyronine(out) = 3,3',5'-triiodo-L-thyronine(in). The catalysed reaction is estrone 3-sulfate(out) = estrone 3-sulfate(in). The enzyme catalyses 17beta-estradiol 17-O-(beta-D-glucuronate)(out) = 17beta-estradiol 17-O-(beta-D-glucuronate)(in). It carries out the reaction taurocholate(out) = taurocholate(in). It catalyses the reaction prostaglandin E2(out) = prostaglandin E2(in). Functionally, organic anion antiporter with apparent broad substrate specificity. Recognizes various substrates including thyroid hormones 3,3',5-triiodo-L-thyronine (T3), L-thyroxine (T4) and 3,3',5'-triiodo-L-thyronine (rT3), conjugated steroids such as estrone 3-sulfate and estradiol 17-beta glucuronide, bile acids such as taurocholate and prostanoids such as prostaglandin E2, likely operating in a tissue-specific manner. May be involved in uptake of metabolites from the circulation into organs such as kidney, liver or placenta. Possibly drives the selective transport of thyroid hormones and estrogens coupled to an outward glutamate gradient across the microvillous membrane of the placenta. The transport mechanism, its electrogenicity and potential tissue-specific counterions remain to be elucidated. In Homo sapiens (Human), this protein is Solute carrier organic anion transporter family member 4A1 (SLCO4A1).